A 373-amino-acid polypeptide reads, in one-letter code: Putative F-box/kelch-repeat protein At2g41360 (373 aa).

Positions 8–54 constitute an F-box domain; sequence WSSLSCLPDEMVLNCLARVPRRYYENISCVSVRLRSLVRTPELYRMR. Kelch repeat units follow at residues 116 to 162 and 163 to 208; these read EIYF…VFDG and KIHV…MVSS.

This chain is Putative F-box/kelch-repeat protein At2g41360, found in Arabidopsis thaliana (Mouse-ear cress).